A 268-amino-acid polypeptide reads, in one-letter code: uncharacterized protein (268 aa).

4 helical membrane-spanning segments follow: residues 32–52 (SLLL…IFFI), 70–90 (VFVG…AFLF), 125–145 (GVSS…FYIF), and 237–257 (IKYI…AYLT).

It belongs to the CbiQ family.

The protein localises to the cell membrane. This is an uncharacterized protein from Methanocaldococcus jannaschii (strain ATCC 43067 / DSM 2661 / JAL-1 / JCM 10045 / NBRC 100440) (Methanococcus jannaschii).